Consider the following 170-residue polypeptide: Acireductone dioxygenase (170 aa).

The Fe(2+) site is built by His99, His101, Glu105, and His144. Ni(2+) contacts are provided by His99, His101, Glu105, and His144.

The protein belongs to the acireductone dioxygenase (ARD) family. In terms of assembly, monomer. Fe(2+) is required as a cofactor. Requires Ni(2+) as cofactor.

The enzyme catalyses 1,2-dihydroxy-5-(methylsulfanyl)pent-1-en-3-one + O2 = 3-(methylsulfanyl)propanoate + CO + formate + 2 H(+). It catalyses the reaction 1,2-dihydroxy-5-(methylsulfanyl)pent-1-en-3-one + O2 = 4-methylsulfanyl-2-oxobutanoate + formate + 2 H(+). It functions in the pathway amino-acid biosynthesis; L-methionine biosynthesis via salvage pathway; L-methionine from S-methyl-5-thio-alpha-D-ribose 1-phosphate: step 5/6. In terms of biological role, catalyzes 2 different reactions between oxygen and the acireductone 1,2-dihydroxy-3-keto-5-methylthiopentene (DHK-MTPene) depending upon the metal bound in the active site. Fe-containing acireductone dioxygenase (Fe-ARD) produces formate and 2-keto-4-methylthiobutyrate (KMTB), the alpha-ketoacid precursor of methionine in the methionine recycle pathway. Ni-containing acireductone dioxygenase (Ni-ARD) produces methylthiopropionate, carbon monoxide and formate, and does not lie on the methionine recycle pathway. The polypeptide is Acireductone dioxygenase (Bacillus thuringiensis subsp. konkukian (strain 97-27)).